The chain runs to 32 residues: uncharacterized protein (32 aa).

The chain crosses the membrane as a helical span at residues 3–23; sequence IGIIFPVVIFITAVVFLAWFF.

Its subcellular location is the cell inner membrane. This is an uncharacterized protein from Escherichia coli (strain K12).